We begin with the raw amino-acid sequence, 589 residues long: Carbonic anhydrase (589 aa).

2 Alpha-carbonic anhydrase domains span residues 59 to 316 (HDYN…YEYK) and 321 to 585 (DKYN…YGYN). Substrate is bound at residue 258-259 (TT). The interval 390–589 (MQINFGDPPA…TVYGYNGAAA (200 aa)) is catalytic. The Zn(2+) site is built by His-420, His-422, and His-440.

Belongs to the alpha-carbonic anhydrase family. It depends on Zn(2+) as a cofactor.

It catalyses the reaction hydrogencarbonate + H(+) = CO2 + H2O. Reversible hydration of carbon dioxide. The protein is Carbonic anhydrase (DCA) of Dunaliella salina (Green alga).